The following is an 86-amino-acid chain: MKIRVNATIITDVEALKADKDLNHFKDYATCETFVVDADNHLKANEEISELLKGWDWWCIWSTRPLSKKDNQVFTLYNDDLYNLCR.

This is an uncharacterized protein from Bacillus subtilis (strain 168).